We begin with the raw amino-acid sequence, 439 residues long: Hydrogenobyrinate a,c-diamide synthase (439 aa).

The GATase cobBQ-type domain maps to 247-439 (RIALAEDGAF…FFHAIARASA (193 aa)). The Nucleophile role is filled by cysteine 329.

The protein belongs to the CobB/CbiA family. Mg(2+) serves as cofactor.

It catalyses the reaction hydrogenobyrinate + 2 L-glutamine + 2 ATP + 2 H2O = hydrogenobyrinate a,c-diamide + 2 L-glutamate + 2 ADP + 2 phosphate + 2 H(+). It functions in the pathway cofactor biosynthesis; adenosylcobalamin biosynthesis; cob(II)yrinate a,c-diamide from precorrin-2 (aerobic route): step 9/10. Its function is as follows. Catalyzes the ATP-dependent amidation of the two carboxylate groups at positions a and c of hydrogenobyrinate, using either L-glutamine or ammonia as the nitrogen source. The sequence is that of Hydrogenobyrinate a,c-diamide synthase from Mesorhizobium japonicum (strain LMG 29417 / CECT 9101 / MAFF 303099) (Mesorhizobium loti (strain MAFF 303099)).